Consider the following 302-residue polypeptide: Coenzyme PQQ synthesis protein B (302 aa).

The protein belongs to the PqqB family.

It participates in cofactor biosynthesis; pyrroloquinoline quinone biosynthesis. Functionally, may be involved in the transport of PQQ or its precursor to the periplasm. This Azotobacter vinelandii (strain DJ / ATCC BAA-1303) protein is Coenzyme PQQ synthesis protein B.